A 260-amino-acid polypeptide reads, in one-letter code: Ras-related protein Rab-32B (260 aa).

Positions Phe11–Val50 are disordered. Over residues Ser21–Asn49 the composition is skewed to low complexity. GTP is bound at residue Gly66–Ser73. An Effector region motif is present at residues Tyr88–Phe96. GTP-binding positions include Asp115–His119 and Asn177–Asp180. The segment at Thr231 to Lys260 is disordered. Residues Asn248–Lys260 are compositionally biased toward basic and acidic residues. 2 S-geranylgeranyl cysteine lipidation sites follow: Cys258 and Cys259.

The protein belongs to the small GTPase superfamily. Rab family.

The polypeptide is Ras-related protein Rab-32B (rab32B) (Dictyostelium discoideum (Social amoeba)).